A 353-amino-acid polypeptide reads, in one-letter code: Rhodopsin (353 aa).

Topologically, residues 1 to 36 (MNGTEGPYFYIPMLNTTGIVRSPYEYPQYYLVNPAA) are extracellular. N-linked (GlcNAc...) asparagine glycans are attached at residues N2 and N15. A helical transmembrane segment spans residues 37–61 (YAALCAYMFLLILLGFPINFLTLYV). The Cytoplasmic portion of the chain corresponds to 62–73 (TIEHKKLRTPLN). A helical membrane pass occupies residues 74–96 (YILLNLAVANLFMVFGGFTTTMY). The Extracellular segment spans residues 97–110 (TSMHGYFVLGRLGC). C110 and C187 are oxidised to a cystine. The chain crosses the membrane as a helical span at residues 111-133 (NLEGFFATLGGEIGLWSLVVLAV). Residues 134-136 (ERW) carry the 'Ionic lock' involved in activated form stabilization motif. Topologically, residues 134–152 (ERWMVVCKPISNFRFTENH) are cytoplasmic. The helical transmembrane segment at 153–173 (AIMGLGFTWFAASACAVPPLV) threads the bilayer. Topologically, residues 174–202 (GWSRYIPEGMQCSCGVDYYTRAEGFNNES) are extracellular. N-linked (GlcNAc...) asparagine glycosylation occurs at N200. A helical membrane pass occupies residues 203–224 (FVVYMFVCHFLIPLIVVFFCYG). Topologically, residues 225–252 (RLLCAVKEAAAAQQESETTQRAEREVTR) are cytoplasmic. Residues 253–274 (MVVIMVIAFLICWCPYAGVAWY) form a helical membrane-spanning segment. The Extracellular segment spans residues 275–286 (IFSNQGSEFGPL). Residues 287–308 (FMTIPAFFAKSSSIYNPLIYIF) form a helical membrane-spanning segment. Position 296 is an N6-(retinylidene)lysine (K296). The Cytoplasmic portion of the chain corresponds to 309–353 (MNKQFRHCMITTLCCGKNPFEEEEGSTTTSKTEASSASSSSVSPA). S-palmitoyl cysteine attachment occurs at residues C322 and C323. The tract at residues 329–353 (EEEEGSTTTSKTEASSASSSSVSPA) is disordered. Residues 334 to 353 (STTTSKTEASSASSSSVSPA) are compositionally biased toward low complexity.

This sequence belongs to the G-protein coupled receptor 1 family. Opsin subfamily. Post-translationally, phosphorylated on some or all of the serine and threonine residues present in the C-terminal region. In terms of processing, contains one covalently linked retinal chromophore.

Its subcellular location is the membrane. The protein localises to the cell projection. It is found in the cilium. The protein resides in the photoreceptor outer segment. Functionally, photoreceptor required for image-forming vision at low light intensity. While most salt water fish species use retinal as chromophore, most freshwater fish use 3-dehydroretinal, or a mixture of retinal and 3-dehydroretinal. Light-induced isomerization of 11-cis to all-trans retinal triggers a conformational change that activates signaling via G-proteins. Subsequent receptor phosphorylation mediates displacement of the bound G-protein alpha subunit by arrestin and terminates signaling. This is Rhodopsin (rho) from Solea solea (Common sole).